Here is a 439-residue protein sequence, read N- to C-terminus: 3-phosphoshikimate 1-carboxyvinyltransferase (439 aa).

Residues Lys-21, Ser-22, and Arg-26 each contribute to the 3-phosphoshikimate site. Lys-21 serves as a coordination point for phosphoenolpyruvate. Gly-94 and Arg-122 together coordinate phosphoenolpyruvate. Ser-167, Gln-169, Asp-320, and Lys-347 together coordinate 3-phosphoshikimate. Gln-169 contacts phosphoenolpyruvate. Asp-320 functions as the Proton acceptor in the catalytic mechanism. Residues Arg-351 and Arg-395 each coordinate phosphoenolpyruvate.

This sequence belongs to the EPSP synthase family. As to quaternary structure, monomer.

Its subcellular location is the cytoplasm. The enzyme catalyses 3-phosphoshikimate + phosphoenolpyruvate = 5-O-(1-carboxyvinyl)-3-phosphoshikimate + phosphate. It participates in metabolic intermediate biosynthesis; chorismate biosynthesis; chorismate from D-erythrose 4-phosphate and phosphoenolpyruvate: step 6/7. Its function is as follows. Catalyzes the transfer of the enolpyruvyl moiety of phosphoenolpyruvate (PEP) to the 5-hydroxyl of shikimate-3-phosphate (S3P) to produce enolpyruvyl shikimate-3-phosphate and inorganic phosphate. This Hyphomonas neptunium (strain ATCC 15444) protein is 3-phosphoshikimate 1-carboxyvinyltransferase.